We begin with the raw amino-acid sequence, 794 residues long: cAMP and cAMP-inhibited cGMP 3',5'-cyclic phosphodiesterase 10A (794 aa).

Residues 296 to 297 (RC), 340 to 341 (IA), Thr374, Gln393, and His525 each bind 3',5'-cyclic AMP. One can recognise a PDEase domain in the interval 452–769 (TSEEWQGLMH…NQWEKVIRGE (318 aa)). The Proton donor role is filled by His525. His525 provides a ligand contact to 3',5'-cyclic GMP. A divalent metal cation contacts are provided by His529, His563, Asp564, and Asp674. 3',5'-cyclic AMP is bound at residue Gln726. 3',5'-cyclic GMP is bound at residue Gln726.

It belongs to the cyclic nucleotide phosphodiesterase family. As to quaternary structure, homodimer. It depends on a divalent metal cation as a cofactor. In terms of tissue distribution, detected in striatum and testis (at protein level). Detected in whole brain, hippocampus, olfactory bulb, striatum neurons and testis.

It is found in the cytoplasm. Its subcellular location is the cytosol. It carries out the reaction a nucleoside 3',5'-cyclic phosphate + H2O = a nucleoside 5'-phosphate + H(+). The enzyme catalyses 3',5'-cyclic AMP + H2O = AMP + H(+). The catalysed reaction is 3',5'-cyclic GMP + H2O = GMP + H(+). It functions in the pathway purine metabolism; 3',5'-cyclic AMP degradation; AMP from 3',5'-cyclic AMP: step 1/1. Its pathway is purine metabolism; 3',5'-cyclic GMP degradation; GMP from 3',5'-cyclic GMP: step 1/1. Its activity is regulated as follows. Inhibited by dipyridamole and moderately by IBMX, zaprinast and rolipram. Plays a role in signal transduction by regulating the intracellular concentration of cyclic nucleotides. Can hydrolyze both cAMP and cGMP, but has higher affinity for cAMP and is more efficient with cAMP as substrate. In Rattus norvegicus (Rat), this protein is cAMP and cAMP-inhibited cGMP 3',5'-cyclic phosphodiesterase 10A (Pde10a).